Here is a 121-residue protein sequence, read N- to C-terminus: Large ribosomal subunit protein uL24 (121 aa).

It belongs to the universal ribosomal protein uL24 family. As to quaternary structure, part of the 50S ribosomal subunit.

Its function is as follows. One of two assembly initiator proteins, it binds directly to the 5'-end of the 23S rRNA, where it nucleates assembly of the 50S subunit. Functionally, located at the polypeptide exit tunnel on the outside of the subunit. The chain is Large ribosomal subunit protein uL24 from Pyrococcus furiosus (strain ATCC 43587 / DSM 3638 / JCM 8422 / Vc1).